The following is a 420-amino-acid chain: Exodeoxyribonuclease 7 large subunit (420 aa).

Belongs to the XseA family. In terms of assembly, heterooligomer composed of large and small subunits.

It localises to the cytoplasm. The enzyme catalyses Exonucleolytic cleavage in either 5'- to 3'- or 3'- to 5'-direction to yield nucleoside 5'-phosphates.. Functionally, bidirectionally degrades single-stranded DNA into large acid-insoluble oligonucleotides, which are then degraded further into small acid-soluble oligonucleotides. The chain is Exodeoxyribonuclease 7 large subunit from Helicobacter pylori (strain HPAG1).